Here is a 317-residue protein sequence, read N- to C-terminus: MYTKIIGTGSYLPEQVRTNADLEKMVDTSDEWIVTRTGIRERHIAAPNETVSTMGFEAATRAIEMAGIEKDQIGLIVVATTSATHAFPSAACQIQSMLGIKGCPAFDVAAACAGFTYALSVADQYVKSGAVKYALVVGSDVLARTCDPTDRGTIIIFGDGAGAAVLAASEEPGIISTHLHADGSYGELLTLPNADRVNPENSIHLTMAGNEVFKVAVTELAHIVDETLAANNLDRSQLDWLVPHQANLRIISATAKKLGMSMDNVVVTLDRHGNTSAASVPCALDEAVRDGRIKPGQLVLLEAFGGGFTWGSVLVRF.

Residues C112 and H244 contribute to the active site. The tract at residues 245–249 is ACP-binding; that stretch reads QANLR. N274 is a catalytic residue.

Belongs to the thiolase-like superfamily. FabH family. In terms of assembly, homodimer.

The protein resides in the cytoplasm. The catalysed reaction is malonyl-[ACP] + acetyl-CoA + H(+) = 3-oxobutanoyl-[ACP] + CO2 + CoA. It functions in the pathway lipid metabolism; fatty acid biosynthesis. Its function is as follows. Catalyzes the condensation reaction of fatty acid synthesis by the addition to an acyl acceptor of two carbons from malonyl-ACP. Catalyzes the first condensation reaction which initiates fatty acid synthesis and may therefore play a role in governing the total rate of fatty acid production. Possesses both acetoacetyl-ACP synthase and acetyl transacylase activities. Its substrate specificity determines the biosynthesis of branched-chain and/or straight-chain of fatty acids. The sequence is that of Beta-ketoacyl-[acyl-carrier-protein] synthase III from Shigella dysenteriae serotype 1 (strain Sd197).